We begin with the raw amino-acid sequence, 224 residues long: MLNKIYDWVDERLDITPMWRDIADHEVPEHVNPAHHFSAFVYCFGGLTFFVTVIQVLSGMFLTMYYVPDIKNAWESVYYLQNEVAFGQIVRGMHHWGASLVIVMMFLHTLRVFFQGAYKKPRELNWIVGVLIFFVMLGLGFTGYLLPWDMKALFATKVGLQIAEATPLIGTQVKTLLAGHPDIVGAQTLTRFFAIHVFFLPAALFGLMAAHFIMIRKQGISGPL.

The helical transmembrane segment at 37–57 threads the bilayer; the sequence is FSAFVYCFGGLTFFVTVIQVL. Residue Tyr42 coordinates heme b. Cys43 contacts heme c. Residues Arg91, His94, His108, and Arg111 each coordinate heme b. 3 helical membrane-spanning segments follow: residues 96-116, 126-146, and 195-215; these read WGAS…FFQG, WIVG…GYLL, and IHVF…FIMI. Heme b-binding residues include His196 and His211. Heme c is bound by residues Arg216 and Ile220. Ser221 contacts heme b.

The protein belongs to the cytochrome b family. The main subunits of the menaquinol:cytochrome c complex are a Rieske-type iron-sulfur protein (QcrA), a cytochrome b (QcrB) and a cytochrome c (QcrC). Heme b is required as a cofactor. Requires heme c as cofactor.

Its subcellular location is the cell membrane. Functionally, component of the menaquinol:cytochrome c reductase complex. This is Menaquinol:cytochrome c reductase cytochrome b subunit from Bacillus subtilis (strain 168).